Here is a 1801-residue protein sequence, read N- to C-terminus: Protein mono-ADP-ribosyltransferase PARP14 (1801 aa).

Residue serine 33 is modified to Phosphoserine. Residues 109-132 (SKTKEDVKEPDVSEELDTKLPLDG) are disordered. 3 Macro domains span residues 791 to 978 (KCFS…KTVF), 1003 to 1190 (WEKG…ARRA), and 1216 to 1387 (DSGV…KKRE). A glycoprotein contacts are provided by residues asparagine 824, leucine 833, 922 to 926 (SSGVF), aspartate 961, 1023 to 1024 (VQ), serine 1034, 1046 to 1049 (LSKS), 1133 to 1137 (GTGNL), 1175 to 1178 (DHEN), 1235 to 1236 (DI), serine 1247, valine 1258, 1332 to 1336 (GTGNA), and phenylalanine 1371. 2 positions are modified to phosphoserine: serine 1403 and serine 1411. One can recognise a WWE domain in the interval 1523–1601 (EQESRADCIS…SLSVQRLTKS (79 aa)). A PARP catalytic domain is found at 1605–1801 (IPAHWSDMKQ…YPEYLITFRK (197 aa)).

It belongs to the ARTD/PARP family. As to quaternary structure, interacts with STAT6. Interacts with PARP10. Interacts with PARP9 in IFNG-stimulated macrophages; the interaction prevents PARP14-mediated STAT1 and STAT6 ADP-riboslylation. Post-translationally, auto-ADP-ribosylated. In terms of tissue distribution, expressed in macrophages.

The protein resides in the nucleus. It localises to the cytoplasm. The catalysed reaction is L-glutamyl-[protein] + NAD(+) = 5-O-(ADP-D-ribosyl)-L-glutamyl-[protein] + nicotinamide. ADP-ribosyltransferase that mediates mono-ADP-ribosylation of glutamate residues on target proteins. In contrast to PARP1 and PARP2, it is not able to mediate poly-ADP-ribosylation. Has been shown to catalyze the mono-ADP-ribosylation of STAT1 at 'Glu-657' and 'Glu-705', thus decreasing STAT1 phosphorylation which negatively regulates pro-inflammatory cytokine production in macrophages in response to IFNG stimulation. However, the role of ADP-ribosylation in the prevention of STAT1 phosphorylation has been called into question and it has been suggested that the inhibition of phosphorylation may be the result of sumoylation of STAT1 'Lys-703'. Mono-ADP-ribosylates STAT6; enhancing STAT6-dependent transcription. In macrophages, positively regulates MRC1 expression in response to IL4 stimulation by promoting STAT6 phosphorylation. Mono-ADP-ribosylates PARP9. This Homo sapiens (Human) protein is Protein mono-ADP-ribosyltransferase PARP14.